The sequence spans 249 residues: Protein ZPS1 (249 aa).

Positions 1 to 20 are cleaved as a signal peptide; sequence MKFSSGKSIIFATIASLALS. N-linked (GlcNAc...) asparagine glycans are attached at residues asparagine 28, asparagine 57, asparagine 98, and asparagine 217.

It belongs to the ZPS1 family.

This chain is Protein ZPS1 (ZPS1), found in Saccharomyces cerevisiae (strain ATCC 204508 / S288c) (Baker's yeast).